A 431-amino-acid chain; its full sequence is uncharacterized protein (431 aa).

The next 4 helical transmembrane spans lie at 228–248 (GLLS…HYLS), 279–299 (IGLP…NFTF), 349–369 (ILWP…FLWI), and 388–408 (MIFN…LKLY).

It localises to the membrane. This is an uncharacterized protein from Saccharomyces cerevisiae (strain ATCC 204508 / S288c) (Baker's yeast).